A 217-amino-acid polypeptide reads, in one-letter code: 3-demethoxyubiquinol 3-hydroxylase (217 aa).

Fe cation is bound by residues Glu66, Glu96, His99, Glu148, Glu180, and His183.

It belongs to the COQ7 family. Requires Fe cation as cofactor.

It localises to the cell membrane. The enzyme catalyses a 5-methoxy-2-methyl-3-(all-trans-polyprenyl)benzene-1,4-diol + AH2 + O2 = a 3-demethylubiquinol + A + H2O. The protein operates within cofactor biosynthesis; ubiquinone biosynthesis. In terms of biological role, catalyzes the hydroxylation of 2-nonaprenyl-3-methyl-6-methoxy-1,4-benzoquinol during ubiquinone biosynthesis. This is 3-demethoxyubiquinol 3-hydroxylase from Xylella fastidiosa (strain Temecula1 / ATCC 700964).